The sequence spans 523 residues: Lysine--tRNA ligase (523 aa).

A 'HIGH' region motif is present at residues 30–38; that stretch reads PSGYVHVGN. Zn(2+) contacts are provided by D95, C99, H100, H106, C177, H180, C199, and H203. A 'KMSKS' region motif is present at residues 279 to 283; the sequence is KMSGS.

This sequence belongs to the class-I aminoacyl-tRNA synthetase family. Zn(2+) serves as cofactor.

It is found in the cytoplasm. It carries out the reaction tRNA(Lys) + L-lysine + ATP = L-lysyl-tRNA(Lys) + AMP + diphosphate. This Pyrococcus horikoshii (strain ATCC 700860 / DSM 12428 / JCM 9974 / NBRC 100139 / OT-3) protein is Lysine--tRNA ligase (lysS).